The chain runs to 490 residues: MTLWINGDWVTGQGALRVKRNPVSGEVLWQGNDADAAQVEQACRAARAAYPRWARLSFGDRQVRVERFAGLLESNKAELTAIIARETGKPRWEAATEVTAMINKIAISIKAYHVRTGEQRSEMPDGAASLRHRPHGVLAVFGPYNFPGHLPNGHIVPALLAGNTIIFKPSELTPWSGEAVMRLWQQAGLPPGVLNLVQGGRETGQALSALEDLDGLLFTGSANTGYQLHRQLSGQPEKILALEMGGNNPLIIDEVADIDAAVHLTIQSAFVTAGQRCTCARRLLLKSGAQGDAFLARLVAVSQRLTPGNWDDEPQPFIGGLISEQAAQQVVTAWQQLEAMGGRTLLAPRLFQAETSLLTPGIIEMTGVAGVPDEEVFGPLLRVWRCDTFDEAIRMANNTRFGLSCGLVSSEREKFDQLLLEARAGIVNWKKPLTGAASTAPFGGIGASGNHRPSAWYAADYCAWPMASLESDSLTLLAMLNPGLDFSDEV.

220–225 (GSANTG) lines the NAD(+) pocket. Active-site residues include glutamate 243 and cysteine 277.

Belongs to the aldehyde dehydrogenase family. AstD subfamily.

It carries out the reaction N-succinyl-L-glutamate 5-semialdehyde + NAD(+) + H2O = N-succinyl-L-glutamate + NADH + 2 H(+). The protein operates within amino-acid degradation; L-arginine degradation via AST pathway; L-glutamate and succinate from L-arginine: step 4/5. In terms of biological role, catalyzes the NAD-dependent reduction of succinylglutamate semialdehyde into succinylglutamate. The sequence is that of N-succinylglutamate 5-semialdehyde dehydrogenase from Shigella dysenteriae serotype 1 (strain Sd197).